The primary structure comprises 348 residues: Holliday junction branch migration complex subunit RuvB (348 aa).

Residues 4–198 are large ATPase domain (RuvB-L); it reads TTDYGASNTG…FGFTAHLDFY (195 aa). ATP-binding positions include Leu37, Arg38, Gly79, Lys82, Thr83, Thr84, 145-147, Arg188, Tyr198, and Arg235; that span reads EDF. Thr83 is a binding site for Mg(2+). Residues 199-269 are small ATPAse domain (RuvB-S); sequence PHEELEKLIE…DVKEALALYQ (71 aa). Residues 272–348 form a head domain (RuvB-H) region; sequence SEGLDRLDIA…DIIFGNYAQR (77 aa). DNA contacts are provided by Arg327 and Arg332.

The protein belongs to the RuvB family. As to quaternary structure, homohexamer. Forms an RuvA(8)-RuvB(12)-Holliday junction (HJ) complex. HJ DNA is sandwiched between 2 RuvA tetramers; dsDNA enters through RuvA and exits via RuvB. An RuvB hexamer assembles on each DNA strand where it exits the tetramer. Each RuvB hexamer is contacted by two RuvA subunits (via domain III) on 2 adjacent RuvB subunits; this complex drives branch migration. In the full resolvosome a probable DNA-RuvA(4)-RuvB(12)-RuvC(2) complex forms which resolves the HJ.

It is found in the cytoplasm. It carries out the reaction ATP + H2O = ADP + phosphate + H(+). In terms of biological role, the RuvA-RuvB-RuvC complex processes Holliday junction (HJ) DNA during genetic recombination and DNA repair, while the RuvA-RuvB complex plays an important role in the rescue of blocked DNA replication forks via replication fork reversal (RFR). RuvA specifically binds to HJ cruciform DNA, conferring on it an open structure. The RuvB hexamer acts as an ATP-dependent pump, pulling dsDNA into and through the RuvAB complex. RuvB forms 2 homohexamers on either side of HJ DNA bound by 1 or 2 RuvA tetramers; 4 subunits per hexamer contact DNA at a time. Coordinated motions by a converter formed by DNA-disengaged RuvB subunits stimulates ATP hydrolysis and nucleotide exchange. Immobilization of the converter enables RuvB to convert the ATP-contained energy into a lever motion, pulling 2 nucleotides of DNA out of the RuvA tetramer per ATP hydrolyzed, thus driving DNA branch migration. The RuvB motors rotate together with the DNA substrate, which together with the progressing nucleotide cycle form the mechanistic basis for DNA recombination by continuous HJ branch migration. Branch migration allows RuvC to scan DNA until it finds its consensus sequence, where it cleaves and resolves cruciform DNA. The chain is Holliday junction branch migration complex subunit RuvB from Bifidobacterium longum (strain DJO10A).